A 544-amino-acid polypeptide reads, in one-letter code: Membrane protein insertase YidC (544 aa).

Residues 29–58 form a disordered region; it reads TPKADPSATTQTLNPTSSESEDYVPTSSDS. The span at 35 to 46 shows a compositional bias: polar residues; that stretch reads SATTQTLNPTSS. Transmembrane regions (helical) follow at residues 341 to 361, 421 to 441, and 499 to 519; these read FVLL…IIAI, GGCF…YVFL, and PVIF…YWLV.

This sequence belongs to the OXA1/ALB3/YidC family. Type 1 subfamily. In terms of assembly, interacts with the Sec translocase complex via SecD. Specifically interacts with transmembrane segments of nascent integral membrane proteins during membrane integration.

Its subcellular location is the cell inner membrane. Its function is as follows. Required for the insertion and/or proper folding and/or complex formation of integral membrane proteins into the membrane. Involved in integration of membrane proteins that insert both dependently and independently of the Sec translocase complex, as well as at least some lipoproteins. Aids folding of multispanning membrane proteins. The chain is Membrane protein insertase YidC from Pseudoalteromonas translucida (strain TAC 125).